Consider the following 95-residue polypeptide: Putative ESAT-6-like protein X (95 aa).

Residues 72 to 95 form a disordered region; the sequence is HGQKVQRASSSMADTDRSVSSAWS.

It belongs to the WXG100 family.

The polypeptide is Putative ESAT-6-like protein X (Mycobacterium leprae (strain TN)).